We begin with the raw amino-acid sequence, 154 residues long: 3-hydroxyacyl-[acyl-carrier-protein] dehydratase FabZ (154 aa).

Residue histidine 57 is part of the active site.

This sequence belongs to the thioester dehydratase family. FabZ subfamily.

The protein resides in the cytoplasm. It catalyses the reaction a (3R)-hydroxyacyl-[ACP] = a (2E)-enoyl-[ACP] + H2O. Involved in unsaturated fatty acids biosynthesis. Catalyzes the dehydration of short chain beta-hydroxyacyl-ACPs and long chain saturated and unsaturated beta-hydroxyacyl-ACPs. In Sinorhizobium medicae (strain WSM419) (Ensifer medicae), this protein is 3-hydroxyacyl-[acyl-carrier-protein] dehydratase FabZ.